A 693-amino-acid polypeptide reads, in one-letter code: ATP-dependent DNA helicase RecG (693 aa).

The tract at residues 48–146 (THLYPIGELL…GDLSTPELQE (99 aa)) is wedge domain. Residues 283–448 (DMALDVPMMR…AYADLDTSVI (166 aa)) enclose the Helicase ATP-binding domain. An ATP-binding site is contributed by 296–303 (GDVGSGKT). The DEAH box signature appears at 397–400 (DEQH). The 147-residue stretch at 482 to 628 (EGRQAYWVCT…GFVIAQKDLE (147 aa)) folds into the Helicase C-terminal domain.

This sequence belongs to the helicase family. RecG subfamily. Monomer.

The catalysed reaction is Couples ATP hydrolysis with the unwinding of duplex DNA by translocating in the 3'-5' direction.. The enzyme catalyses ATP + H2O = ADP + phosphate + H(+). In terms of biological role, plays a critical role in recombination and DNA repair. Helps process Holliday junction intermediates to mature products by catalyzing branch migration. Has replication fork regression activity, unwinds stalled or blocked replication forks to make a HJ that can be resolved. Has a DNA unwinding activity characteristic of a DNA helicase with 3'-5' polarity. Plays a role in recovery after DNA ADP-ribosylation. The sequence is that of ATP-dependent DNA helicase RecG from Escherichia coli O127:H6 (strain E2348/69 / EPEC).